The chain runs to 440 residues: Ribosomal protein uS12 methylthiotransferase RimO (440 aa).

One can recognise an MTTase N-terminal domain in the interval 2–118 (KKAGIIHLGC…FVSLITSNGE (117 aa)). [4Fe-4S] cluster is bound by residues Cys11, Cys47, Cys81, Cys154, Cys158, and Cys161. A Radical SAM core domain is found at 140 to 370 (ISPNFWVYVK…MSTQKEISKK (231 aa)). Residues 373-440 (AKLLGREFDV…RAYDLLGELV (68 aa)) form the TRAM domain.

This sequence belongs to the methylthiotransferase family. RimO subfamily. [4Fe-4S] cluster is required as a cofactor.

Its subcellular location is the cytoplasm. The enzyme catalyses L-aspartate(89)-[ribosomal protein uS12]-hydrogen + (sulfur carrier)-SH + AH2 + 2 S-adenosyl-L-methionine = 3-methylsulfanyl-L-aspartate(89)-[ribosomal protein uS12]-hydrogen + (sulfur carrier)-H + 5'-deoxyadenosine + L-methionine + A + S-adenosyl-L-homocysteine + 2 H(+). Its function is as follows. Catalyzes the methylthiolation of an aspartic acid residue of ribosomal protein uS12. This Dictyoglomus thermophilum (strain ATCC 35947 / DSM 3960 / H-6-12) protein is Ribosomal protein uS12 methylthiotransferase RimO.